The following is a 701-amino-acid chain: DNA ligase (701 aa).

Residues 43–47, 92–93, and E126 each bind NAD(+); these read DAAYD and SL. The active-site N6-AMP-lysine intermediate is the K128. Positions 149, 186, 302, and 326 each coordinate NAD(+). C420, C423, C444, and C450 together coordinate Zn(2+). The region spanning 623 to 701 is the BRCT domain; sequence ANDSPVAGKT…EDEWFDLIGA (79 aa).

The protein belongs to the NAD-dependent DNA ligase family. LigA subfamily. It depends on Mg(2+) as a cofactor. The cofactor is Mn(2+).

It carries out the reaction NAD(+) + (deoxyribonucleotide)n-3'-hydroxyl + 5'-phospho-(deoxyribonucleotide)m = (deoxyribonucleotide)n+m + AMP + beta-nicotinamide D-nucleotide.. In terms of biological role, DNA ligase that catalyzes the formation of phosphodiester linkages between 5'-phosphoryl and 3'-hydroxyl groups in double-stranded DNA using NAD as a coenzyme and as the energy source for the reaction. It is essential for DNA replication and repair of damaged DNA. The chain is DNA ligase from Maricaulis maris (strain MCS10) (Caulobacter maris).